The following is a 450-amino-acid chain: UDP-N-acetylmuramoylalanine--D-glutamate ligase (450 aa).

Residue 112–118 (GSNGKTT) coordinates ATP.

It belongs to the MurCDEF family.

Its subcellular location is the cytoplasm. The enzyme catalyses UDP-N-acetyl-alpha-D-muramoyl-L-alanine + D-glutamate + ATP = UDP-N-acetyl-alpha-D-muramoyl-L-alanyl-D-glutamate + ADP + phosphate + H(+). The protein operates within cell wall biogenesis; peptidoglycan biosynthesis. In terms of biological role, cell wall formation. Catalyzes the addition of glutamate to the nucleotide precursor UDP-N-acetylmuramoyl-L-alanine (UMA). The sequence is that of UDP-N-acetylmuramoylalanine--D-glutamate ligase from Cytophaga hutchinsonii (strain ATCC 33406 / DSM 1761 / CIP 103989 / NBRC 15051 / NCIMB 9469 / D465).